A 177-amino-acid polypeptide reads, in one-letter code: Large ribosomal subunit protein uL6 (177 aa).

The disordered stretch occupies residues 157–177 (YKGKGVRYAGEKVRRKEGKKK).

The protein belongs to the universal ribosomal protein uL6 family. Part of the 50S ribosomal subunit.

This protein binds to the 23S rRNA, and is important in its secondary structure. It is located near the subunit interface in the base of the L7/L12 stalk, and near the tRNA binding site of the peptidyltransferase center. The protein is Large ribosomal subunit protein uL6 of Caulobacter vibrioides (strain ATCC 19089 / CIP 103742 / CB 15) (Caulobacter crescentus).